The sequence spans 113 residues: Ig kappa chain V-II region MOPC 511 (113 aa).

Positions 1-23 (DIVITQDELSKPVTSGESVSISC) are framework-1. A disulfide bridge links C23 with C93. Residues 24–39 (RSSKSLLYKDGKTYLN) form a complementarity-determining-1 region. Residues 40–54 (WFLQGPQQSPRLLIY) are framework-2. The interval 55-61 (LMSTRAS) is complementarity-determining-2. Positions 62–93 (GVSDRFSGSGSGTDFTLEISRVKAEDVGVYYC) are framework-3. The complementarity-determining-3 stretch occupies residues 94 to 102 (QQLVEYPLT). The interval 103–112 (FGAGTKLELK) is framework-4.

The chain is Ig kappa chain V-II region MOPC 511 from Mus musculus (Mouse).